The following is a 133-amino-acid chain: Small ribosomal subunit protein uS8 (133 aa).

It belongs to the universal ribosomal protein uS8 family. As to quaternary structure, part of the 30S ribosomal subunit. Contacts proteins S5 and S12.

In terms of biological role, one of the primary rRNA binding proteins, it binds directly to 16S rRNA central domain where it helps coordinate assembly of the platform of the 30S subunit. This Chloroflexus aggregans (strain MD-66 / DSM 9485) protein is Small ribosomal subunit protein uS8.